We begin with the raw amino-acid sequence, 442 residues long: Histidine--tRNA ligase (442 aa).

The disordered stretch occupies residues 416-442; the sequence is SGDETTVPVEEFPPEGGEELPTYEDYE. Acidic residues predominate over residues 427–442; that stretch reads FPPEGGEELPTYEDYE.

It belongs to the class-II aminoacyl-tRNA synthetase family.

The protein localises to the cytoplasm. It carries out the reaction tRNA(His) + L-histidine + ATP = L-histidyl-tRNA(His) + AMP + diphosphate + H(+). The chain is Histidine--tRNA ligase from Halorubrum lacusprofundi (strain ATCC 49239 / DSM 5036 / JCM 8891 / ACAM 34).